The following is a 69-amino-acid chain: MIKPSLDQLMHLVDSKYTLVILAARRARDLQDGKHQMVESKSNKPVTIALEELAAGKLFFERGKPTPLG.

It belongs to the RNA polymerase subunit omega family. As to quaternary structure, the RNAP catalytic core consists of 2 alpha, 1 beta, 1 beta' and 1 omega subunit. When a sigma factor is associated with the core the holoenzyme is formed, which can initiate transcription.

The enzyme catalyses RNA(n) + a ribonucleoside 5'-triphosphate = RNA(n+1) + diphosphate. Its function is as follows. Promotes RNA polymerase assembly. Latches the N- and C-terminal regions of the beta' subunit thereby facilitating its interaction with the beta and alpha subunits. This is DNA-directed RNA polymerase subunit omega from Symbiobacterium thermophilum (strain DSM 24528 / JCM 14929 / IAM 14863 / T).